A 212-amino-acid chain; its full sequence is Agglutinin isolectin 1 (212 aa).

The N-terminal stretch at 1-26 (MKMMSTRALALGAAAVLAFAAATAQA) is a signal peptide. Pyrrolidone carboxylic acid is present on Gln-27. 4 Chitin-binding type-1 domains span residues 27–68 (QRCG…ACWT), 69–111 (SKRC…PCRA), 112–154 (DIKC…ACST), and 155–197 (DKPC…GCDG). 16 disulfide bridges follow: Cys-29-Cys-44, Cys-38-Cys-50, Cys-43-Cys-57, Cys-61-Cys-66, Cys-72-Cys-87, Cys-81-Cys-93, Cys-86-Cys-100, Cys-104-Cys-109, Cys-115-Cys-130, Cys-124-Cys-136, Cys-129-Cys-143, Cys-147-Cys-152, Cys-158-Cys-173, Cys-167-Cys-179, Cys-172-Cys-186, and Cys-190-Cys-195. 36-38 (MEC) provides a ligand contact to substrate. A substrate-binding site is contributed by 88 to 99 (SQYGYCGFGAEY). Substrate is bound at residue 140–141 (SE). The propeptide occupies 198 to 212 (VFAEAITANSTLLQE).

In terms of assembly, homodimer, u-shaped.

Functionally, N-acetyl-D-glucosamine / N-acetyl-D-neuraminic acid binding lectin. This chain is Agglutinin isolectin 1, found in Triticum aestivum (Wheat).